The sequence spans 1487 residues: Chromosome partition protein MukB (1487 aa).

Residue 34–41 (GGNGAGKS) participates in ATP binding. Coiled-coil stretches lie at residues 297 to 426 (SSRE…LEKA), 460 to 666 (ALKH…RLAS), 781 to 806 (RAAREQRLELLRSEREEVVEKHAKAA), 836 to 1111 (EQAL…RTFV), and 1210 to 1266 (VEAI…LSNI). Residues 667 to 784 (PGGSNDPRLK…VIPLFGRAAR (118 aa)) are flexible hinge.

This sequence belongs to the SMC family. MukB subfamily. As to quaternary structure, homodimerization via its hinge domain. Binds to DNA via its C-terminal region. Interacts, and probably forms a ternary complex, with MukE and MukF via its C-terminal region. The complex formation is stimulated by calcium or magnesium. Interacts with tubulin-related protein FtsZ.

It localises to the cytoplasm. The protein localises to the nucleoid. Plays a central role in chromosome condensation, segregation and cell cycle progression. Functions as a homodimer, which is essential for chromosome partition. Involved in negative DNA supercoiling in vivo, and by this means organize and compact chromosomes. May achieve or facilitate chromosome segregation by condensation DNA from both sides of a centrally located replisome during cell division. The polypeptide is Chromosome partition protein MukB (Vibrio vulnificus (strain CMCP6)).